A 670-amino-acid chain; its full sequence is Small ribosomal subunit protein mS39 (670 aa).

The N-terminal 13 residues, Met-1–Cys-13, are a transit peptide targeting the mitochondrion. PPR repeat units follow at residues Val-129–Pro-163, Ser-164–Asp-199, Arg-209–Arg-239, Asn-240–Ala-274, Asp-275–Pro-314, Asn-315–Pro-351, Ser-352–Arg-392, Asp-396–Gly-430, Gln-438–Pro-472, Asn-473–Asn-507, and Ser-556–Pro-590. A disordered region spans residues Ile-187–Tyr-213. Acidic residues predominate over residues Glu-193–Thr-203. Residues Glu-648–Glu-670 form a disordered region. Positions Ser-653–Glu-670 are enriched in low complexity.

The protein belongs to the mitochondrion-specific ribosomal protein mS39 family.

Its subcellular location is the mitochondrion. Functionally, mitochondrial protein that may have a role in mitochondrial translation. This is Small ribosomal subunit protein mS39 (ptcd3) from Xenopus tropicalis (Western clawed frog).